Reading from the N-terminus, the 163-residue chain is Nucleotide-binding protein Tery_2743 (163 aa).

The protein belongs to the YajQ family.

Functionally, nucleotide-binding protein. This chain is Nucleotide-binding protein Tery_2743, found in Trichodesmium erythraeum (strain IMS101).